The sequence spans 256 residues: Thioredoxin-dependent peroxide reductase, mitochondrial (256 aa).

The N-terminal 61 residues, 1–61 (MAAAVGRLLR…KLFSTSSSCH (61 aa)), are a transit peptide targeting the mitochondrion. The Thioredoxin domain maps to 63-221 (PAVTQHAPYF…TLRLVKAFQY (159 aa)). The residue at position 83 (K83) is an N6-succinyllysine. Position 91 is an N6-acetyllysine; alternate (K91). The residue at position 91 (K91) is an N6-succinyllysine; alternate. The active-site Cysteine sulfenic acid (-SOH) intermediate is C108. T146 bears the Phosphothreonine mark.

This sequence belongs to the peroxiredoxin family. AhpC/Prx1 subfamily. In terms of assembly, homodimer; disulfide-linked, upon oxidation. 6 homodimers assemble to form a ring-like dodecamer. Interacts with NEK6. Interacts with LRRK2. Interacts with MAP3K13. Interacts with RPS6KC1 (via PX domain). Post-translationally, phosphorylated by LRRK2; phosphorylation reduces perodixase activity. In terms of processing, the enzyme can be inactivated by further oxidation of the cysteine sulfenic acid (C(P)-SOH) to sulphinic acid (C(P)-SO2H) and sulphonic acid (C(P)-SO3H) instead of its condensation to a disulfide bond. S-palmitoylated.

It localises to the mitochondrion. Its subcellular location is the cytoplasm. The protein resides in the early endosome. The catalysed reaction is a hydroperoxide + [thioredoxin]-dithiol = an alcohol + [thioredoxin]-disulfide + H2O. Thiol-specific peroxidase that catalyzes the reduction of hydrogen peroxide and organic hydroperoxides to water and alcohols, respectively. Plays a role in cell protection against oxidative stress by detoxifying peroxides. Acts synergistically with MAP3K13 to regulate the activation of NF-kappa-B in the cytosol. Required for the maintenance of physical strength. The sequence is that of Thioredoxin-dependent peroxide reductase, mitochondrial (PRDX3) from Homo sapiens (Human).